A 172-amino-acid polypeptide reads, in one-letter code: Protein GrpE (172 aa).

The protein belongs to the GrpE family. In terms of assembly, homodimer.

The protein resides in the cytoplasm. Its function is as follows. Participates actively in the response to hyperosmotic and heat shock by preventing the aggregation of stress-denatured proteins, in association with DnaK and GrpE. It is the nucleotide exchange factor for DnaK and may function as a thermosensor. Unfolded proteins bind initially to DnaJ; upon interaction with the DnaJ-bound protein, DnaK hydrolyzes its bound ATP, resulting in the formation of a stable complex. GrpE releases ADP from DnaK; ATP binding to DnaK triggers the release of the substrate protein, thus completing the reaction cycle. Several rounds of ATP-dependent interactions between DnaJ, DnaK and GrpE are required for fully efficient folding. This chain is Protein GrpE, found in Thermotoga maritima (strain ATCC 43589 / DSM 3109 / JCM 10099 / NBRC 100826 / MSB8).